A 403-amino-acid polypeptide reads, in one-letter code: Tryptophan synthase beta chain (403 aa).

Position 87 is an N6-(pyridoxal phosphate)lysine (K87).

The protein belongs to the TrpB family. Tetramer of two alpha and two beta chains. It depends on pyridoxal 5'-phosphate as a cofactor.

It catalyses the reaction (1S,2R)-1-C-(indol-3-yl)glycerol 3-phosphate + L-serine = D-glyceraldehyde 3-phosphate + L-tryptophan + H2O. Its pathway is amino-acid biosynthesis; L-tryptophan biosynthesis; L-tryptophan from chorismate: step 5/5. Its function is as follows. The beta subunit is responsible for the synthesis of L-tryptophan from indole and L-serine. The sequence is that of Tryptophan synthase beta chain from Shewanella loihica (strain ATCC BAA-1088 / PV-4).